Here is an 849-residue protein sequence, read N- to C-terminus: ATP-binding cassette sub-family B member 6 (849 aa).

At 1-25 (MVRLGSYCEHNGSISQAWLDSGLSP) the chain is on the lumenal side. Residues 1–195 (MVRLGSYCEH…TLFLFVLGIR (195 aa)) form a required for the lysosomal targeting region. The segment at 1–227 (MVRLGSYCEH…SQPLLRDPNQ (227 aa)) is required for ATPase activity. Residues Cys-8 and Cys-26 are joined by a disulfide bond. N-linked (GlcNAc...) asparagine glycosylation is present at Asn-11. Residues 26 to 46 (CFYFTLVPSVLLSFSFLLGAL) form a helical membrane-spanning segment. Residues 47 to 72 (QSALYARHSTTMEPKYIPRSRLYRLQ) lie on the Cytoplasmic side of the membrane. Residues 73–93 (IVLSVVLILQSVIGLIWQAAG) traverse the membrane as a helical segment. Residues 94 to 98 (TDVVY) lie on the Lumenal side of the membrane. The helical transmembrane segment at 99–119 (GYMIVHGCLSVVAWGFSLWLL) threads the bilayer. Residues 120–136 (HLERTRALVREKSRGHG) are Cytoplasmic-facing. The chain crosses the membrane as a helical span at residues 137-157 (VVLLLFWALAFAAENLAFISW). Topologically, residues 158–173 (QSPNWWWLSRDTVPQK) are lumenal. The chain crosses the membrane as a helical span at residues 174-194 (VQFGLWITRYVCTLFLFVLGI). The Cytoplasmic segment spans residues 195-254 (RAPGRPRKPYIVLINEDERDVETSQPLLRDPNQSTWQGFKKKLLLVMQYIWPRRNIPLQL). A helical transmembrane segment spans residues 255-275 (LVALCMGLMGLERAINVFVPI). The ABC transmembrane type-1 domain occupies 256 to 547 (VALCMGLMGL…FGTYYRMIQS (292 aa)). Topologically, residues 276–291 (YAKKIVDGLTEDSTWN) are lumenal. The helical transmembrane segment at 292-312 (ILAVTVCIYVLLKFLQGGGAG) threads the bilayer. The Cytoplasmic portion of the chain corresponds to 313-373 (TTGFLSNLRT…VDRGTSSINS (61 aa)). The helical transmembrane segment at 374-394 (LLSYIVFSILPTIADIVIGIV) threads the bilayer. At 395 to 401 (YFTSSFN) the chain is on the lumenal side. Residues 402–422 (AWFGLIIFVCMTLYLTLTIII) traverse the membrane as a helical segment. Residues 423 to 492 (TEWRTKYRRE…ASLAMLNQTQ (70 aa)) lie on the Cytoplasmic side of the membrane. A helical membrane pass occupies residues 493 to 513 (NLIIGLGLLAGSLLCAYFVTE). The Lumenal segment spans residues 514-520 (NKFKVGD). Residues 521 to 541 (YVLFGTYIIQLYTPLNWFGTY) form a helical membrane-spanning segment. Over 542 to 849 (YRMIQSSFID…PPKATPRRGH (308 aa)) the chain is Cytoplasmic. Positions 581-815 (IEFENVHFSY…GGVYAGMWQK (235 aa)) constitute an ABC transporter domain. ATP is bound by residues Tyr-590 and 614–625 (GPSGSGKSTIIR). Low complexity predominate over residues 814–825 (QKQQSGSESSSD). Residues 814 to 849 (QKQQSGSESSSDSDSERKDRTSEKLQPPKATPRRGH) are disordered. Basic and acidic residues predominate over residues 827–836 (DSERKDRTSE).

It belongs to the ABC transporter superfamily. ABCB family. Heavy Metal importer (TC 3.A.1.210) subfamily. As to quaternary structure, homodimer. N-glycosylated.

The protein localises to the cell membrane. It is found in the mitochondrion outer membrane. The protein resides in the endoplasmic reticulum membrane. It localises to the golgi apparatus membrane. Its subcellular location is the endosome membrane. The protein localises to the lysosome membrane. It is found in the late endosome membrane. The protein resides in the early endosome membrane. It localises to the secreted. Its subcellular location is the extracellular exosome. The protein localises to the mitochondrion. It is found in the endosome. The protein resides in the multivesicular body membrane. It localises to the melanosome membrane. The catalysed reaction is heme b(in) + ATP + H2O = heme b(out) + ADP + phosphate + H(+). It carries out the reaction coproporphyrin III(in) + ATP + H2O = coproporphyrin III(out) + ADP + phosphate + H(+). The enzyme catalyses pheophorbide a(in) + ATP + H2O = pheophorbide a(out) + ADP + phosphate + H(+). It catalyses the reaction coproporphyrinogen III(in) + ATP + H2O = coproporphyrinogen III(out) + ADP + phosphate + H(+). The catalysed reaction is protoporphyrin IX(in) + ATP + H2O = protoporphyrin IX(out) + ADP + phosphate + H(+). It carries out the reaction coproporphyrin I(in) + ATP + H2O = coproporphyrin I(out) + ADP + phosphate + H(+). The enzyme catalyses uroporphyrin I(in) + ATP + H2O = uroporphyrin I(out) + ADP + phosphate + H(+). It catalyses the reaction uroporphyrin III(in) + ATP + H2O = uroporphyrin III(out) + ADP + phosphate + H(+). ATP-dependent transporter that catalyzes the transport of a broad-spectrum of porphyrins from the cytoplasm to the extracellular space through the plasma membrane or into the vesicle lumen. May also function as an ATP-dependent importer of porphyrins from the cytoplasm into the mitochondria, in turn may participate in the de novo heme biosynthesis regulation and in the coordination of heme and iron homeostasis during phenylhydrazine stress. May also play a key role in the early steps of melanogenesis producing PMEL amyloid fibrils. In vitro, it confers to cells a resistance to toxic metal such as arsenic and cadmium and against chemotherapeutics agent such as 5-fluorouracil, SN-38 and vincristin. In addition may play a role in the transition metal homeostasis. The sequence is that of ATP-binding cassette sub-family B member 6 (abcb6) from Xenopus tropicalis (Western clawed frog).